The following is a 418-amino-acid chain: F-box protein At1g10780 (418 aa).

Residues 1 to 47 (MDSLPDAILQYILSYLTSARDVAACNCVSKRWKESTDSVKSVVFHRN) enclose the F-box domain.

In Arabidopsis thaliana (Mouse-ear cress), this protein is F-box protein At1g10780.